The chain runs to 278 residues: 4-hydroxy-tetrahydrodipicolinate reductase (278 aa).

NAD(+)-binding positions include 13-18 (GAAGKM) and 111-113 (GTT). The active-site Proton donor/acceptor is the H167. Residue H168 participates in (S)-2,3,4,5-tetrahydrodipicolinate binding. K171 serves as the catalytic Proton donor. 177–178 (GT) serves as a coordination point for (S)-2,3,4,5-tetrahydrodipicolinate.

Belongs to the DapB family.

It is found in the cytoplasm. It catalyses the reaction (S)-2,3,4,5-tetrahydrodipicolinate + NAD(+) + H2O = (2S,4S)-4-hydroxy-2,3,4,5-tetrahydrodipicolinate + NADH + H(+). The enzyme catalyses (S)-2,3,4,5-tetrahydrodipicolinate + NADP(+) + H2O = (2S,4S)-4-hydroxy-2,3,4,5-tetrahydrodipicolinate + NADPH + H(+). It participates in amino-acid biosynthesis; L-lysine biosynthesis via DAP pathway; (S)-tetrahydrodipicolinate from L-aspartate: step 4/4. Functionally, catalyzes the conversion of 4-hydroxy-tetrahydrodipicolinate (HTPA) to tetrahydrodipicolinate. The polypeptide is 4-hydroxy-tetrahydrodipicolinate reductase (Nostoc sp. (strain PCC 7120 / SAG 25.82 / UTEX 2576)).